The following is a 60-amino-acid chain: MVVVDKEIKKGQYYLVNGNVVRVTYVNGFDVYYLILKLHKRMICDRAVFSSVAKEIKLHG.

This is an uncharacterized protein from Enterobacteria phage T4 (Bacteriophage T4).